Reading from the N-terminus, the 180-residue chain is O-acetyl-ADP-ribose deacetylase (180 aa).

Residues 1-175 form the Macro domain; that stretch reads MSGRINVVQG…LYQRLLGQYD (175 aa). Residues 11–12, Asn25, 33–35, and 122–126 contribute to the substrate site; these read DI, GVD, and STGIY. Asp35 serves as the catalytic Proton acceptor.

This sequence belongs to the MacroD-type family. YmdB subfamily. As to quaternary structure, homodimer. Interacts with RNase III.

It carries out the reaction 3''-O-acetyl-ADP-D-ribose + H2O = ADP-D-ribose + acetate + H(+). It catalyses the reaction 2''-O-acetyl-ADP-D-ribose + H2O = ADP-D-ribose + acetate + H(+). Functionally, deacetylates O-acetyl-ADP ribose to yield ADP-ribose and free acetate. Down-regulates ribonuclease 3 (RNase III) activity. Acts by interacting directly with the region of the ribonuclease that is required for dimerization/activation. This is O-acetyl-ADP-ribose deacetylase from Cronobacter sakazakii (strain ATCC BAA-894) (Enterobacter sakazakii).